Reading from the N-terminus, the 375-residue chain is Cobalt-precorrin-5B C(1)-methyltransferase (375 aa).

This sequence belongs to the CbiD family.

The enzyme catalyses Co-precorrin-5B + S-adenosyl-L-methionine = Co-precorrin-6A + S-adenosyl-L-homocysteine. It participates in cofactor biosynthesis; adenosylcobalamin biosynthesis; cob(II)yrinate a,c-diamide from sirohydrochlorin (anaerobic route): step 6/10. Functionally, catalyzes the methylation of C-1 in cobalt-precorrin-5B to form cobalt-precorrin-6A. The sequence is that of Cobalt-precorrin-5B C(1)-methyltransferase from Paracidovorax citrulli (strain AAC00-1) (Acidovorax citrulli).